The following is a 338-amino-acid chain: Ketol-acid reductoisomerase (NADP(+)) (338 aa).

Residues Met-1–Thr-181 form the KARI N-terminal Rossmann domain. Residues Tyr-24 to Gln-27, Arg-47, Ser-50, Ser-52, and Asp-82 to Gln-85 contribute to the NADP(+) site. Residue His-107 is part of the active site. Gly-133 is a binding site for NADP(+). The KARI C-terminal knotted domain occupies Ser-182 to Ile-327. Mg(2+) is bound by residues Asp-190, Glu-194, Glu-226, and Glu-230. Substrate is bound at residue Ser-251.

This sequence belongs to the ketol-acid reductoisomerase family. Mg(2+) serves as cofactor.

The enzyme catalyses (2R)-2,3-dihydroxy-3-methylbutanoate + NADP(+) = (2S)-2-acetolactate + NADPH + H(+). It carries out the reaction (2R,3R)-2,3-dihydroxy-3-methylpentanoate + NADP(+) = (S)-2-ethyl-2-hydroxy-3-oxobutanoate + NADPH + H(+). It participates in amino-acid biosynthesis; L-isoleucine biosynthesis; L-isoleucine from 2-oxobutanoate: step 2/4. The protein operates within amino-acid biosynthesis; L-valine biosynthesis; L-valine from pyruvate: step 2/4. In terms of biological role, involved in the biosynthesis of branched-chain amino acids (BCAA). Catalyzes an alkyl-migration followed by a ketol-acid reduction of (S)-2-acetolactate (S2AL) to yield (R)-2,3-dihydroxy-isovalerate. In the isomerase reaction, S2AL is rearranged via a Mg-dependent methyl migration to produce 3-hydroxy-3-methyl-2-ketobutyrate (HMKB). In the reductase reaction, this 2-ketoacid undergoes a metal-dependent reduction by NADPH to yield (R)-2,3-dihydroxy-isovalerate. This is Ketol-acid reductoisomerase (NADP(+)) from Acinetobacter baylyi (strain ATCC 33305 / BD413 / ADP1).